The chain runs to 248 residues: MEDNCIKIAQVSDLHLTSENCETSRGRYSNAMNVFSAISLSGQHDMIFITGDISDDYTENSYKQLLEMLKKLTCRVFVIPGNHDDVNLMNKIIPEKYLFSPETVTSFNTFDFLFVNTVVNGEIHGLLTDQDLSLFQNHLENSGNKKKCIIMHHNPIPLNRKIYDKYMLLNYQDFLRIICLYDNVKLVIFGHVHNDYTISYRQTLFSSAPATCYQIKKFESDIIIEEKYGYKNYFLFEEFIETNCIWIK.

Positions 13, 15, 52, 82, 152, 191, and 193 each coordinate Fe cation. Residues His-15, Asp-52, and 82–83 each bind AMP; that span reads NH. Residue His-193 participates in AMP binding.

It belongs to the cyclic nucleotide phosphodiesterase class-III family. It depends on Fe(2+) as a cofactor.

This chain is Probable cyclic nucleotide phosphodiesterase CBUA0032, found in Coxiella burnetii (strain RSA 493 / Nine Mile phase I).